Here is a 433-residue protein sequence, read N- to C-terminus: Enolase (433 aa).

Q167 is a binding site for (2R)-2-phosphoglycerate. E209 (proton donor) is an active-site residue. D246, E291, and D318 together coordinate Mg(2+). (2R)-2-phosphoglycerate-binding residues include K343, R372, S373, and K394. Catalysis depends on K343, which acts as the Proton acceptor.

It belongs to the enolase family. In terms of assembly, component of the RNA degradosome, a multiprotein complex involved in RNA processing and mRNA degradation. It depends on Mg(2+) as a cofactor.

It localises to the cytoplasm. It is found in the secreted. The protein localises to the cell surface. The catalysed reaction is (2R)-2-phosphoglycerate = phosphoenolpyruvate + H2O. It functions in the pathway carbohydrate degradation; glycolysis; pyruvate from D-glyceraldehyde 3-phosphate: step 4/5. Its function is as follows. Catalyzes the reversible conversion of 2-phosphoglycerate (2-PG) into phosphoenolpyruvate (PEP). It is essential for the degradation of carbohydrates via glycolysis. In Actinobacillus succinogenes (strain ATCC 55618 / DSM 22257 / CCUG 43843 / 130Z), this protein is Enolase.